The primary structure comprises 470 residues: ATP synthase subunit beta (470 aa).

Residue 157–164 (GGAGVGKT) participates in ATP binding.

The protein belongs to the ATPase alpha/beta chains family. In terms of assembly, F-type ATPases have 2 components, CF(1) - the catalytic core - and CF(0) - the membrane proton channel. CF(1) has five subunits: alpha(3), beta(3), gamma(1), delta(1), epsilon(1). CF(0) has three main subunits: a(1), b(2) and c(9-12). The alpha and beta chains form an alternating ring which encloses part of the gamma chain. CF(1) is attached to CF(0) by a central stalk formed by the gamma and epsilon chains, while a peripheral stalk is formed by the delta and b chains.

The protein localises to the cell inner membrane. It catalyses the reaction ATP + H2O + 4 H(+)(in) = ADP + phosphate + 5 H(+)(out). Produces ATP from ADP in the presence of a proton gradient across the membrane. The catalytic sites are hosted primarily by the beta subunits. This is ATP synthase subunit beta from Geotalea daltonii (strain DSM 22248 / JCM 15807 / FRC-32) (Geobacter daltonii).